The primary structure comprises 186 residues: ATP synthase subunit delta (186 aa).

Belongs to the ATPase delta chain family. In terms of assembly, F-type ATPases have 2 components, F(1) - the catalytic core - and F(0) - the membrane proton channel. F(1) has five subunits: alpha(3), beta(3), gamma(1), delta(1), epsilon(1). CF(0) has four main subunits: a(1), b(1), b'(1) and c(10-14). The alpha and beta chains form an alternating ring which encloses part of the gamma chain. F(1) is attached to F(0) by a central stalk formed by the gamma and epsilon chains, while a peripheral stalk is formed by the delta, b and b' chains.

It is found in the cell inner membrane. Its function is as follows. F(1)F(0) ATP synthase produces ATP from ADP in the presence of a proton or sodium gradient. F-type ATPases consist of two structural domains, F(1) containing the extramembraneous catalytic core and F(0) containing the membrane proton channel, linked together by a central stalk and a peripheral stalk. During catalysis, ATP synthesis in the catalytic domain of F(1) is coupled via a rotary mechanism of the central stalk subunits to proton translocation. In terms of biological role, this protein is part of the stalk that links CF(0) to CF(1). It either transmits conformational changes from CF(0) to CF(1) or is implicated in proton conduction. The sequence is that of ATP synthase subunit delta from Bradyrhizobium sp. (strain BTAi1 / ATCC BAA-1182).